We begin with the raw amino-acid sequence, 65 residues long: UPF0434 protein RPD_0454 (65 aa).

Belongs to the UPF0434 family.

This is UPF0434 protein RPD_0454 from Rhodopseudomonas palustris (strain BisB5).